A 62-amino-acid polypeptide reads, in one-letter code: Short neurotoxin 2 (62 aa).

Residues 1 to 20 (MTCYNQQSSEAKTTTTCSGG) form a disordered region. 4 disulfides stabilise this stretch: cysteine 3–cysteine 24, cysteine 17–cysteine 41, cysteine 43–cysteine 54, and cysteine 55–cysteine 60.

The protein belongs to the three-finger toxin family. Short-chain subfamily. Type I alpha-neurotoxin sub-subfamily. Expressed by the venom gland.

Its subcellular location is the secreted. Its function is as follows. Binds to muscle nicotinic acetylcholine receptor (nAChR) and inhibit acetylcholine from binding to the receptor, thereby impairing neuromuscular transmission. This Oxyuranus scutellatus scutellatus (Australian taipan) protein is Short neurotoxin 2.